The primary structure comprises 694 residues: Cyclic nucleotide-gated channel alpha-3 (694 aa).

Polar residues-rich tracts occupy residues 1–11 and 112–123; these read MAKINTQYSHP and SQESNAQANVGS. 2 disordered regions span residues 1 to 24 and 109 to 152; these read MAKI…SDRD and EVSS…EEKK. Topologically, residues 1 to 170 are cytoplasmic; sequence MAKINTQYSH…VDPSSNLYYR (170 aa). A helical membrane pass occupies residues 171 to 192; sequence WLTAIALPVFYNWYLLICRACF. The Extracellular portion of the chain corresponds to 193 to 198; sequence DELQSE. Residues 199 to 219 form a helical membrane-spanning segment; it reads YLMLWLVLDYSADVLYVLDVL. The Cytoplasmic segment spans residues 220–246; the sequence is VRARTGFLEQGLMVSDTNRLWQHYKTT. The chain crosses the membrane as a helical span at residues 247–266; the sequence is TQFKLDVLSLVPTDLAYLKV. Residues 267–270 are Extracellular-facing; sequence GTNY. A helical transmembrane segment spans residues 271–288; it reads PEVRFNRLLKFSRLFEFF. The Cytoplasmic portion of the chain corresponds to 289–298; it reads DRTETRTNYP. Positions 298–406 are ion conduction pathway; sequence PNMFRIGNLV…GNVGSMISNM (109 aa). Residues 299–321 traverse the membrane as a helical segment; that stretch reads NMFRIGNLVLYILIIIHWNACIY. The Extracellular segment spans residues 322 to 347; sequence FAISKFIGFGTDSWVYPNISIPEHGR. An N-linked (GalNAc...) asparagine glycan is attached at Asn339. Transmembrane regions (helical) follow at residues 348-378 and 379-403; these read LSRK…DEEY and LFVV…GSMI. The interval 365–368 is selectivity filter; sequence TIGE. At 404-694 the chain is on the cytoplasmic side; that stretch reads SNMNASRAEF…DATKTEDKQQ (291 aa). The segment at 408 to 485 is C-linker; it reads ASRAEFQAKI…TLKKVRIFQD (78 aa). The segment at 488–608 is cyclic nucleotide-binding domain; the sequence is AGLLVELVLK…EEKGRQILMK (121 aa). 6 residues coordinate 3',5'-cyclic GMP: Gly548, Glu549, Ser551, Arg564, Thr565, and Asp609. Positions 626-669 form a coiled coil; sequence LEEKVEQLGSSLDTLQTRFARLLAEYNATQMKMKQRLSQLESQV. A disordered region spans residues 662–694; the sequence is LSQLESQVKGGGDKPLADGEVPGDATKTEDKQQ.

This sequence belongs to the cyclic nucleotide-gated cation channel (TC 1.A.1.5) family. CNGA3 subfamily. As to quaternary structure, forms heterotetrameric channels composed of CNGA3 and CNGB3 subunits with 3:1 stoichiometry. Prominently expressed in retina.

It localises to the cell membrane. It catalyses the reaction Ca(2+)(in) = Ca(2+)(out). The catalysed reaction is Na(+)(in) = Na(+)(out). The enzyme catalyses K(+)(in) = K(+)(out). It carries out the reaction NH4(+)(in) = NH4(+)(out). It catalyses the reaction Rb(+)(in) = Rb(+)(out). The catalysed reaction is Li(+)(in) = Li(+)(out). The enzyme catalyses Cs(+)(in) = Cs(+)(out). Inhibited by L-cis-diltiazem. Functionally, pore-forming subunit of the cone cyclic nucleotide-gated channel. Mediates cone photoresponses at bright light converting transient changes in intracellular cGMP levels into electrical signals. In the dark, cGMP levels are high and keep the channel open enabling a steady inward current carried by Na(+) and Ca(2+) ions that leads to membrane depolarization and neurotransmitter release from synaptic terminals. Upon photon absorption cGMP levels decline leading to channel closure and membrane hyperpolarization that ultimately slows neurotransmitter release and signals the presence of light, the end point of the phototransduction cascade. Pore-forming subunit of the gustatory cyclic nucleotide-gated channel. In the taste buds, may sense oral extracellular pH and conduct ion currents that modulate the excitability of taste cells. Conducts cGMP- and cAMP-gated ion currents, with permeability for monovalent and divalent cations. This is Cyclic nucleotide-gated channel alpha-3 from Homo sapiens (Human).